The sequence spans 183 residues: Segregation and condensation protein B (183 aa).

The protein belongs to the ScpB family. In terms of assembly, homodimer. Homodimerization may be required to stabilize the binding of ScpA to the Smc head domains. Component of a cohesin-like complex composed of ScpA, ScpB and the Smc homodimer, in which ScpA and ScpB bind to the head domain of Smc. The presence of the three proteins is required for the association of the complex with DNA.

The protein resides in the cytoplasm. Functionally, participates in chromosomal partition during cell division. May act via the formation of a condensin-like complex containing Smc and ScpA that pull DNA away from mid-cell into both cell halves. The protein is Segregation and condensation protein B of Streptococcus pyogenes serotype M1.